A 293-amino-acid polypeptide reads, in one-letter code: Immediate early response gene 5-like protein (293 aa).

Belongs to the IER family.

In Xenopus laevis (African clawed frog), this protein is Immediate early response gene 5-like protein (ier5l).